Reading from the N-terminus, the 886-residue chain is Protein translocase subunit SecA (886 aa).

ATP-binding positions include glutamine 81, 99 to 103, and aspartate 489; that span reads GEGKT.

Belongs to the SecA family.

The protein localises to the plastid. The protein resides in the chloroplast stroma. Its subcellular location is the chloroplast thylakoid membrane. The catalysed reaction is ATP + H2O + cellular proteinSide 1 = ADP + phosphate + cellular proteinSide 2.. Functionally, has a central role in coupling the hydrolysis of ATP to the transfer of proteins across the thylakoid membrane. This chain is Protein translocase subunit SecA, found in Phaeodactylum tricornutum (strain CCAP 1055/1).